The primary structure comprises 212 residues: Pyridoxine/pyridoxamine 5'-phosphate oxidase (212 aa).

Substrate contacts are provided by residues Arg7–Tyr10 and Lys66. FMN-binding positions include Arg61–Lys66, Tyr76–Thr77, Arg82, Lys83, and Gln105. The substrate site is built by Tyr123, Arg127, and Ser131. FMN is bound by residues Gln140–Ser141 and Trp185. A substrate-binding site is contributed by Arg191 to His193. Arg195 is an FMN binding site.

Belongs to the pyridoxamine 5'-phosphate oxidase family. Homodimer. FMN is required as a cofactor.

It catalyses the reaction pyridoxamine 5'-phosphate + O2 + H2O = pyridoxal 5'-phosphate + H2O2 + NH4(+). It carries out the reaction pyridoxine 5'-phosphate + O2 = pyridoxal 5'-phosphate + H2O2. Its pathway is cofactor metabolism; pyridoxal 5'-phosphate salvage; pyridoxal 5'-phosphate from pyridoxamine 5'-phosphate: step 1/1. It functions in the pathway cofactor metabolism; pyridoxal 5'-phosphate salvage; pyridoxal 5'-phosphate from pyridoxine 5'-phosphate: step 1/1. Its function is as follows. Catalyzes the oxidation of either pyridoxine 5'-phosphate (PNP) or pyridoxamine 5'-phosphate (PMP) into pyridoxal 5'-phosphate (PLP). This Hahella chejuensis (strain KCTC 2396) protein is Pyridoxine/pyridoxamine 5'-phosphate oxidase.